The following is a 616-amino-acid chain: ATP-dependent zinc metalloprotease FtsH 3 (616 aa).

At 1–9 (MSKNNKKWR) the chain is on the cytoplasmic side. The chain crosses the membrane as a helical span at residues 10–30 (NAGLYALLLIVVLALASAFFD). The Lumenal segment spans residues 31 to 108 (RPTQTRETLS…VQPQSDEGFW (78 aa)). The chain crosses the membrane as a helical span at residues 109–129 (FRIASTLFLPILLLVGIFFLF). Residues 130-616 (RRAQSGPGSQ…NNNAKLALLV (487 aa)) are Cytoplasmic-facing. Residue 201-208 (GPPGTGKT) coordinates ATP. Histidine 423 serves as a coordination point for Zn(2+). The active site involves glutamate 424. Histidine 427 and aspartate 504 together coordinate Zn(2+).

It in the central section; belongs to the AAA ATPase family. In the C-terminal section; belongs to the peptidase M41 family. In terms of assembly, homohexamer (Potential). Part of a large complex that includes FtsH2 and PSII. Coimmunoprecipitates with YidC. The cofactor is Zn(2+).

The protein localises to the cellular thylakoid membrane. In terms of biological role, acts as a processive, ATP-dependent zinc metallopeptidase for both cytoplasmic and membrane proteins. Plays a role in the quality control of integral membrane proteins. The protein is ATP-dependent zinc metalloprotease FtsH 3 of Synechocystis sp. (strain ATCC 27184 / PCC 6803 / Kazusa).